The sequence spans 202 residues: Dephospho-CoA kinase (202 aa).

The region spanning 5–202 (VIGLTGGIGS…KKYLTLTKMV (198 aa)) is the DPCK domain. 13–18 (GSGKTT) provides a ligand contact to ATP.

It belongs to the CoaE family.

It localises to the cytoplasm. It carries out the reaction 3'-dephospho-CoA + ATP = ADP + CoA + H(+). The protein operates within cofactor biosynthesis; coenzyme A biosynthesis; CoA from (R)-pantothenate: step 5/5. Catalyzes the phosphorylation of the 3'-hydroxyl group of dephosphocoenzyme A to form coenzyme A. In Colwellia psychrerythraea (strain 34H / ATCC BAA-681) (Vibrio psychroerythus), this protein is Dephospho-CoA kinase.